The following is a 443-amino-acid chain: Glucose-6-phosphate isomerase (443 aa).

Glu285 serves as the catalytic Proton donor. Active-site residues include His306 and Lys420.

Belongs to the GPI family.

Its subcellular location is the cytoplasm. It catalyses the reaction alpha-D-glucose 6-phosphate = beta-D-fructose 6-phosphate. It participates in carbohydrate biosynthesis; gluconeogenesis. It functions in the pathway carbohydrate degradation; glycolysis; D-glyceraldehyde 3-phosphate and glycerone phosphate from D-glucose: step 2/4. Catalyzes the reversible isomerization of glucose-6-phosphate to fructose-6-phosphate. The sequence is that of Glucose-6-phosphate isomerase from Staphylococcus epidermidis (strain ATCC 12228 / FDA PCI 1200).